The following is a 180-amino-acid chain: Small ribosomal subunit protein uS4 (180 aa).

One can recognise an S4 RNA-binding domain in the interval 103 to 174 (RRLQTIVYKK…HPERMMIEKA (72 aa)).

It belongs to the universal ribosomal protein uS4 family. As to quaternary structure, part of the 30S ribosomal subunit. Contacts protein S5. The interaction surface between S4 and S5 is involved in control of translational fidelity.

Functionally, one of the primary rRNA binding proteins, it binds directly to 16S rRNA where it nucleates assembly of the body of the 30S subunit. With S5 and S12 plays an important role in translational accuracy. The protein is Small ribosomal subunit protein uS4 of Pyrococcus horikoshii (strain ATCC 700860 / DSM 12428 / JCM 9974 / NBRC 100139 / OT-3).